Here is a 464-residue protein sequence, read N- to C-terminus: ATP-dependent protease ATPase subunit HslU (464 aa).

Residues V19, 61–66, D278, E342, and R414 contribute to the ATP site; that span reads GVGKTE.

This sequence belongs to the ClpX chaperone family. HslU subfamily. As to quaternary structure, a double ring-shaped homohexamer of HslV is capped on each side by a ring-shaped HslU homohexamer. The assembly of the HslU/HslV complex is dependent on binding of ATP.

It is found in the cytoplasm. Its function is as follows. ATPase subunit of a proteasome-like degradation complex; this subunit has chaperone activity. The binding of ATP and its subsequent hydrolysis by HslU are essential for unfolding of protein substrates subsequently hydrolyzed by HslV. HslU recognizes the N-terminal part of its protein substrates and unfolds these before they are guided to HslV for hydrolysis. The polypeptide is ATP-dependent protease ATPase subunit HslU (Halalkalibacterium halodurans (strain ATCC BAA-125 / DSM 18197 / FERM 7344 / JCM 9153 / C-125) (Bacillus halodurans)).